Reading from the N-terminus, the 523-residue chain is DNA-directed primase/polymerase protein (523 aa).

Residues arginine 78, 117-119 (DLE), and 168-172 (KFSHH) contribute to the substrate site. Mn(2+) is bound by residues aspartate 117 and glutamate 119. Residues 203–230 (LKKSNPEAPGENRDDVEGTQAKRRKTEE) are disordered. Residues 258 to 261 (RNFR) and lysine 267 each bind substrate. Zn(2+) contacts are provided by cysteine 390, histidine 397, cysteine 417, and cysteine 422. Positions 390–423 (CHNVKRFHKSNNIIIVVDLKEEVWYQKCHDPECR) match the Zinc knuckle motif motif. Residues 467 to 477 (APAESTSTTPS) are compositionally biased toward low complexity. The disordered stretch occupies residues 467–523 (APAESTSTTPSEDTEGWGDWPDDPAYLRALQEVEEEEEDEDEEVPDELLLQAVNECE). Composition is skewed to acidic residues over residues 478–488 (EDTEGWGDWPD) and 498–512 (EVEE…EVPD).

This sequence belongs to the eukaryotic-type primase small subunit family. It depends on Mn(2+) as a cofactor.

It is found in the nucleus. It localises to the mitochondrion matrix. Its subcellular location is the chromosome. It carries out the reaction ssDNA + n NTP = ssDNA/pppN(pN)n-1 hybrid + (n-1) diphosphate.. The catalysed reaction is DNA(n) + a 2'-deoxyribonucleoside 5'-triphosphate = DNA(n+1) + diphosphate. Its function is as follows. DNA primase and DNA polymerase required to tolerate replication-stalling lesions by bypassing them. Required to facilitate mitochondrial and nuclear replication fork progression by initiating de novo DNA synthesis using dNTPs and acting as an error-prone DNA polymerase able to bypass certain DNA lesions. Shows a high capacity to tolerate DNA damage lesions such as 8oxoG and abasic sites in DNA. Provides different translesion synthesis alternatives when DNA replication is stalled: able to synthesize DNA primers downstream of lesions, such as UV lesions, R-loops and G-quadruplexes, to allow DNA replication to continue. Can also realign primers ahead of 'unreadable lesions' such as abasic sites and 6-4 photoproduct (6-4 pyrimidine-pyrimidinone), thereby skipping the lesion. Repriming avoids fork degradation while leading to accumulation of internal ssDNA gaps behind the forks. Also able to incorporate nucleotides opposite DNA lesions such as 8oxoG, like a regular translesion synthesis DNA polymerase. Also required for reinitiating stalled forks after ultraviolet (UV) damage during nuclear DNA replication. Required for mitochondrial DNA (mtDNA) synthesis and replication, by reinitiating synthesis after UV damage or in the presence of chain-terminating nucleotides. In addition to its role in DNA damage response, also required to maintain efficient nuclear and mitochondrial DNA replication in unperturbed cells. The protein is DNA-directed primase/polymerase protein of Danio rerio (Zebrafish).